A 214-amino-acid chain; its full sequence is uncharacterized protein (214 aa).

The region spanning 1–194 (MVSANREMAV…MHYSEYLSYV (194 aa)) is the AMMECR1 domain.

This is an uncharacterized protein from Arabidopsis thaliana (Mouse-ear cress).